A 304-amino-acid chain; its full sequence is Non-specific ribonucleoside hydrolase RihC (304 aa).

The active site involves His-233.

Belongs to the IUNH family. RihC subfamily.

Hydrolyzes both purine and pyrimidine ribonucleosides with a broad-substrate specificity. The protein is Non-specific ribonucleoside hydrolase RihC of Klebsiella pneumoniae subsp. pneumoniae (strain ATCC 700721 / MGH 78578).